Reading from the N-terminus, the 277-residue chain is Large ribosomal subunit protein uL2 (277 aa).

2 disordered regions span residues 32-58 (KSLT…RGGG) and 225-277 (VAMN…RRNK). Residues 258-277 (YKTRKKKRYSDKFIIKRRNK) are compositionally biased toward basic residues.

It belongs to the universal ribosomal protein uL2 family. Part of the 50S ribosomal subunit. Forms a bridge to the 30S subunit in the 70S ribosome.

Its function is as follows. One of the primary rRNA binding proteins. Required for association of the 30S and 50S subunits to form the 70S ribosome, for tRNA binding and peptide bond formation. It has been suggested to have peptidyltransferase activity; this is somewhat controversial. Makes several contacts with the 16S rRNA in the 70S ribosome. The chain is Large ribosomal subunit protein uL2 from Borreliella afzelii (strain PKo) (Borrelia afzelii).